Consider the following 145-residue polypeptide: D-aminoacyl-tRNA deacylase (145 aa).

The short motif at 137–138 (GP) is the Gly-cisPro motif, important for rejection of L-amino acids element.

It belongs to the DTD family. In terms of assembly, homodimer.

The protein resides in the cytoplasm. It carries out the reaction glycyl-tRNA(Ala) + H2O = tRNA(Ala) + glycine + H(+). The enzyme catalyses a D-aminoacyl-tRNA + H2O = a tRNA + a D-alpha-amino acid + H(+). Functionally, an aminoacyl-tRNA editing enzyme that deacylates mischarged D-aminoacyl-tRNAs. Also deacylates mischarged glycyl-tRNA(Ala), protecting cells against glycine mischarging by AlaRS. Acts via tRNA-based rather than protein-based catalysis; rejects L-amino acids rather than detecting D-amino acids in the active site. By recycling D-aminoacyl-tRNA to D-amino acids and free tRNA molecules, this enzyme counteracts the toxicity associated with the formation of D-aminoacyl-tRNA entities in vivo and helps enforce protein L-homochirality. The polypeptide is D-aminoacyl-tRNA deacylase (Pelobacter propionicus (strain DSM 2379 / NBRC 103807 / OttBd1)).